The sequence spans 452 residues: Chromosomal replication initiator protein DnaA (452 aa).

The interval 1-84 (MTENEQIFWN…SIEYVFEETQ (84 aa)) is domain I, interacts with DnaA modulators. The domain II stretch occupies residues 84 to 110 (QSTSNSPQISQNKTAELATETLPFVQN). A domain III, AAA+ region region spans residues 111-329 (DLNPKYSFDN…GALKDISLVA (219 aa)). The ATP site is built by glycine 155, glycine 157, lysine 158, and threonine 159. The domain IV, binds dsDNA stretch occupies residues 330–452 (NFKKLDVITV…EMETIKNKIK (123 aa)).

The protein belongs to the DnaA family. As to quaternary structure, oligomerizes as a right-handed, spiral filament on DNA at oriC.

The protein resides in the cytoplasm. Plays an essential role in the initiation and regulation of chromosomal replication. ATP-DnaA binds to the origin of replication (oriC) to initiate formation of the DNA replication initiation complex once per cell cycle. Binds the DnaA box (a 9 base pair repeat at the origin) and separates the double-stranded (ds)DNA. Forms a right-handed helical filament on oriC DNA; dsDNA binds to the exterior of the filament while single-stranded (ss)DNA is stabiized in the filament's interior. The ATP-DnaA-oriC complex binds and stabilizes one strand of the AT-rich DNA unwinding element (DUE), permitting loading of DNA polymerase. After initiation quickly degrades to an ADP-DnaA complex that is not apt for DNA replication. Binds acidic phospholipids. The chain is Chromosomal replication initiator protein DnaA from Streptococcus mutans serotype c (strain ATCC 700610 / UA159).